The following is a 164-amino-acid chain: HTH-type transcriptional regulator IscR (164 aa).

In terms of domain architecture, HTH rrf2-type spans 2–131; sequence RLTSKGRYAV…NNITLAELVN (130 aa). The H-T-H motif DNA-binding region spans 28 to 51; sequence LADISERQGISLSYLEQLFSRLRK. [2Fe-2S] cluster is bound by residues C92, C98, and C104. The a metal cation site is built by C92, C98, and C104. Positions 145 to 164 are disordered; it reads DTRRTANGRPQETINVNLRA. Over residues 152-164 the composition is skewed to polar residues; it reads GRPQETINVNLRA.

The cofactor is [2Fe-2S] cluster.

In terms of biological role, regulates the transcription of several operons and genes involved in the biogenesis of Fe-S clusters and Fe-S-containing proteins. This is HTH-type transcriptional regulator IscR from Serratia proteamaculans (strain 568).